Consider the following 238-residue polypeptide: RNA pyrophosphohydrolase (238 aa).

Positions 6–149 (GFRPNVGIIL…KREVYQMALS (144 aa)) constitute a Nudix hydrolase domain. Positions 38–59 (GGIKYGETPEQAMYRELHEEVG) match the Nudix box motif. The segment at 161-238 (APLSPYGRGG…PDDTPSKDSL (78 aa)) is disordered. Residues 171 to 181 (PHRERDGRDNR) show a composition bias toward basic and acidic residues. Residues 188 to 199 (RNDQNTRGQRQP) show a composition bias toward polar residues. Over residues 204 to 217 (VTTSTVIVETVITS) the composition is skewed to low complexity.

The protein belongs to the Nudix hydrolase family. RppH subfamily. Requires a divalent metal cation as cofactor.

Functionally, accelerates the degradation of transcripts by removing pyrophosphate from the 5'-end of triphosphorylated RNA, leading to a more labile monophosphorylated state that can stimulate subsequent ribonuclease cleavage. In Ralstonia nicotianae (strain ATCC BAA-1114 / GMI1000) (Ralstonia solanacearum), this protein is RNA pyrophosphohydrolase.